The primary structure comprises 172 residues: Photosystem I assembly protein Ycf3 (172 aa).

TPR repeat units follow at residues 35-70, 74-107, and 122-155; these read AFTYYRDGAIMLAQSEGNYAEALQNYYEATRLEIDP, SYILYNIGLIHTSNGEHTKALEYYFRALERNPFL, and GEQAILQGDSEIAEAWFDQAAEYWKQAIALTPGN.

This sequence belongs to the Ycf3 family.

It is found in the plastid. The protein localises to the chloroplast thylakoid membrane. Essential for the assembly of the photosystem I (PSI) complex. May act as a chaperone-like factor to guide the assembly of the PSI subunits. The protein is Photosystem I assembly protein Ycf3 of Sorghum bicolor (Sorghum).